Reading from the N-terminus, the 263-residue chain is MAKVNIPIPNDFVKLILISQGHLGGIKTSKLMERYVFGTRKLENIKVIDIEKTWEKFILAARMFCSLKHPSDAVVVSTKTFGRKGVLKFCESTCATPVIGRFIPGTFCNNQVKRPLEPRVLIVSDPFADKQAVIEGSHVNLQTIAFCNTDNDVSFVDIVIPMNNRSPVSISAGLFILSRLIRFMKTGEPLDENMKEVELFIYRDPIELEKLVEEQKIIENANITIGEQELYEQEEFGNKAGWGIEPSLVSTEAVSEFSDNWKN.

Belongs to the universal ribosomal protein uS2 family. As to quaternary structure, component of the small ribosomal subunit. Mature ribosomes consist of a small (40S) and a large (60S) subunit. The 40S subunit contains about 33 different proteins and 1 molecule of RNA (18S). The 60S subunit contains about 49 different proteins and 3 molecules of RNA (25S, 5.8S and 5S). Interacts with RPS21.

The protein localises to the cytoplasm. Its function is as follows. Required for the assembly and/or stability of the 40S ribosomal subunit. Required for the processing of the 20S rRNA-precursor to mature 18S rRNA in a late step of the maturation of 40S ribosomal subunits. This is Small ribosomal subunit protein uS2 from Vairimorpha ceranae (strain BRL01) (Microsporidian parasite).